A 101-amino-acid chain; its full sequence is Large ribosomal subunit protein uL23c (101 aa).

Belongs to the universal ribosomal protein uL23 family. As to quaternary structure, part of the 50S ribosomal subunit.

It is found in the plastid. Its subcellular location is the chloroplast. Its function is as follows. Binds to 23S rRNA. This Cyanidium caldarium (Red alga) protein is Large ribosomal subunit protein uL23c (rpl23).